Consider the following 64-residue polypeptide: MAKSKGARIIITLECTECRTNSDKRSAGVSRYTSTKNRRNTTNRLELKKFCTHCNKHTVHKEIK.

It belongs to the bacterial ribosomal protein bL33 family.

In Nostoc punctiforme (strain ATCC 29133 / PCC 73102), this protein is Large ribosomal subunit protein bL33.